The following is a 368-amino-acid chain: L-arabinitol 4-dehydrogenase (368 aa).

Zn(2+) is bound by residues C52, H77, E78, C107, C110, C113, C121, and E162. 3 residues coordinate NAD(+): D210, R215, and I282.

This sequence belongs to the zinc-containing alcohol dehydrogenase family. As to quaternary structure, homotetramer. It depends on Zn(2+) as a cofactor.

It catalyses the reaction L-arabinitol + NAD(+) = L-xylulose + NADH + H(+). In terms of biological role, plays a key role in liamocins biosynthesis by providing the arabinol moity that is linked to 3,5-dihydroxydecanoic acid (provided by the HR-PKS PKS1) via ester bond formation catalyzed by the esterase EST1. In Aureobasidium melanogenum (Aureobasidium pullulans var. melanogenum), this protein is L-arabinitol 4-dehydrogenase.